The following is a 274-amino-acid chain: MPIQKCKPTSPGRRFVEKVVHDHLHKGAPYAPLVEAKKRTGGRNNNGHITTRHVGGGHKQHYRIVDFKRNKDGVPAVVERIEYDPNRTAHIALLKYADGERRYIIAPKGLRAGDKVQSGNDAPIRPGNCLPLRNMPIGSTLHNVELKIGKGAQLARSAGASVQLLGRDGSYAIIRLRSGEMRKVHVECRAVIGEVSNQENNLRSLGKAGAARWRGVRPTVRGMAMNPIDHPHGGGEGRNKGIQPVSPWGQKAKGYKTRTNKRTTKMIIRDRRVK.

2 disordered regions span residues 38-57 (KRTG…VGGG) and 224-256 (AMNP…KGYK). Basic and acidic residues predominate over residues 229 to 239 (DHPHGGGEGRN).

It belongs to the universal ribosomal protein uL2 family. As to quaternary structure, part of the 50S ribosomal subunit. Forms a bridge to the 30S subunit in the 70S ribosome.

One of the primary rRNA binding proteins. Required for association of the 30S and 50S subunits to form the 70S ribosome, for tRNA binding and peptide bond formation. It has been suggested to have peptidyltransferase activity; this is somewhat controversial. Makes several contacts with the 16S rRNA in the 70S ribosome. The sequence is that of Large ribosomal subunit protein uL2 from Acinetobacter baumannii (strain AB307-0294).